Here is a 664-residue protein sequence, read N- to C-terminus: DNA mismatch repair protein MutL (664 aa).

The tract at residues 382 to 447 (RKAGQEQQLQ…YGEPAPSKQQ (66 aa)) is disordered. Residues 427–436 (RHTTSSNQSE) are compositionally biased toward polar residues.

Belongs to the DNA mismatch repair MutL/HexB family.

In terms of biological role, this protein is involved in the repair of mismatches in DNA. It is required for dam-dependent methyl-directed DNA mismatch repair. May act as a 'molecular matchmaker', a protein that promotes the formation of a stable complex between two or more DNA-binding proteins in an ATP-dependent manner without itself being part of a final effector complex. In Vibrio vulnificus (strain CMCP6), this protein is DNA mismatch repair protein MutL.